The chain runs to 279 residues: Elongation factor Ts (279 aa).

Residues 80-83 (TDFV) form an involved in Mg(2+) ion dislocation from EF-Tu region.

The protein belongs to the EF-Ts family.

It is found in the cytoplasm. Its function is as follows. Associates with the EF-Tu.GDP complex and induces the exchange of GDP to GTP. It remains bound to the aminoacyl-tRNA.EF-Tu.GTP complex up to the GTP hydrolysis stage on the ribosome. The chain is Elongation factor Ts from Borreliella burgdorferi (strain ZS7) (Borrelia burgdorferi).